Reading from the N-terminus, the 330-residue chain is Membrane progestin receptor gamma (330 aa).

Topologically, residues 1 to 51 (MLSLKLPRLFRIDQVPQVFHEQGILFGYRHPQSSATACILSLFQMTNETLN) are cytoplasmic. Residues 52–72 (IWTHLLPFWFFVWRFMTALYV) form a helical membrane-spanning segment. Topologically, residues 73-81 (TDIQNDSYS) are extracellular. The chain crosses the membrane as a helical span at residues 82–101 (WPMLVYMCTSCVYPLASSCA). Topologically, residues 102–113 (HTFSSMSKNARH) are cytoplasmic. The chain crosses the membrane as a helical span at residues 114 to 134 (ICYFLDYGAVNLFSLGSAIAY). Topologically, residues 135 to 141 (SAYTFPD) are extracellular. Residues 142-162 (ALVCSTFHECYVALAVLNTIL) form a helical membrane-spanning segment. The Cytoplasmic portion of the chain corresponds to 163–186 (STGLSCYSRFLELQKPRLCKLLRV). A helical membrane pass occupies residues 187–207 (LAFAYPYTWDSLPIFYRLFLF). Topologically, residues 208–253 (PGESSRNEAMLYHQKHMGMTLLASFFYSAHLPERLAPGRFDYIGHS) are extracellular. The helical transmembrane segment at 254 to 274 (HQLFHVCVILATHLQMEAILL) threads the bilayer. Over 275–294 (DKTLRREWLLATSRPFSFPQ) the chain is Cytoplasmic. Residues 295 to 315 (IAAAMLLCIIFSLSNIIYFSA) form a helical membrane-spanning segment. At 316–330 (ALYRIPEPELHEKET) the chain is on the extracellular side.

It belongs to the ADIPOR family.

It localises to the cell membrane. In terms of biological role, plasma membrane progesterone (P4) receptor coupled to G proteins. Seems to act through a G(i) mediated pathway. May be involved in oocyte maturation. The polypeptide is Membrane progestin receptor gamma (Mus musculus (Mouse)).